Here is a 324-residue protein sequence, read N- to C-terminus: MTAHLKKAELHCHIEGATPPELALRQARKYGVDTSAIIRDRAYVWEDFTSFVRCYDAVASLFRTEGDYALLAETYLTELAKAGTIYSEIIVSPDHGVTIGLGADAYIEGLAAGMEAARVKTGIESRMLITGIRHLGPDSVIRTAEYAAMRRHPLVTGFNLAGEERMHSVAEFSRAFDIVRDAGLGLTIHAGELSGAFSVRDALDHVRPARISHGVRAIEDGDLVKRLADEGVVLEVCPGSNVALQVFPDFASHPLRRLYEAGVRVTLNSDDPPFFHTSLAQEYEIAFHAMGFSDSEIDRMTKTAIEAAFVDEPTREKLLAALHV.

Zn(2+) is bound by residues His11, His13, and His189. Residue Glu192 is the Proton donor of the active site. A Zn(2+)-binding site is contributed by Asp270. Substrate is bound at residue Asp271.

The protein belongs to the metallo-dependent hydrolases superfamily. Adenosine and AMP deaminases family. Adenine deaminase type 2 subfamily. Zn(2+) is required as a cofactor.

The catalysed reaction is adenine + H2O + H(+) = hypoxanthine + NH4(+). Catalyzes the hydrolytic deamination of adenine to hypoxanthine. Plays an important role in the purine salvage pathway and in nitrogen catabolism. The chain is Adenine deaminase from Rhizobium meliloti (strain 1021) (Ensifer meliloti).